Consider the following 155-residue polypeptide: Small ribosomal subunit protein uS7 (155 aa).

The protein belongs to the universal ribosomal protein uS7 family. In terms of assembly, part of the 30S ribosomal subunit. Contacts proteins S9 and S11.

One of the primary rRNA binding proteins, it binds directly to 16S rRNA where it nucleates assembly of the head domain of the 30S subunit. Is located at the subunit interface close to the decoding center, probably blocks exit of the E-site tRNA. The protein is Small ribosomal subunit protein uS7 of Corynebacterium diphtheriae (strain ATCC 700971 / NCTC 13129 / Biotype gravis).